Here is a 74-residue protein sequence, read N- to C-terminus: Coleoptericin (74 aa).

Residues 1–74 form a disordered region; the sequence is SLQGGAPNFP…TWHVGGTYRR (74 aa).

It belongs to the coleoptericin family.

The protein localises to the secreted. Responsible for the anti Gram-negative activity of immune hemolymph of Z.atratus. The chain is Coleoptericin from Zophobas atratus (Giant mealworm beetle).